The chain runs to 754 residues: Bifunctional sesterterpene synthase astC (754 aa).

A signal peptide spans M1–S24. A sesterterpene synthase region spans residues I58–W388. Positions 149 and 153 each coordinate Mg(2+). The geranylfarnesyl diphosphate synthase stretch occupies residues R389–V753. Basic and acidic residues predominate over residues E392–D403. Residues E392 to S414 are disordered. Mg(2+) is bound by residues D512 and D516.

It in the N-terminal section; belongs to the terpene synthase family. This sequence in the C-terminal section; belongs to the FPP/GGPP synthase family. Requires Mg(2+) as cofactor.

The enzyme catalyses (2E,6E,10E,14E)-geranylfarnesyl diphosphate = preasperterpenoid A + diphosphate. It participates in secondary metabolite biosynthesis; terpenoid biosynthesis. Its function is as follows. Bifunctional sesterterpene synthase; part of the gene cluster that mediates the biosynthesis of the asperterpenoids, sesterterpenes that exhibit anti-tuberculosis activity. The first step of the pathway is performed by the sesterterpene synthase astC that possesses both prenyl transferase and terpene cyclase activity, converting isopentenyl diphosphate and dimethylallyl diphosphate into geranylfarnesyl diphosphate (GFPP) and further converting GFPP into preasperterpenoid A, respectively. The cytochrome P450 monooxygenase astB then dually oxidizes preasperterpenoid A to produce asperterpenoid A along with a minor product, asperterpenoid B. Finally, the cytochrome P450 monooxygenase astA converts asperterpenoid A into asperterpenoid C. The protein is Bifunctional sesterterpene synthase astC of Talaromyces wortmannii (Penicillium wortmannii).